A 483-amino-acid polypeptide reads, in one-letter code: 23S rRNA (uracil(1939)-C(5))-methyltransferase RlmD (483 aa).

Positions 1 to 11 (MTGLGKRRPAR) are enriched in basic residues. The disordered stretch occupies residues 1-36 (MTGLGKRRPARSRSGVSGLRERRQPASVERSAGSEG). A TRAM domain is found at 29–90 (ERSAGSEGRR…KRFDEAHVSE (62 aa)). Residues C103, C109, C112, and C189 each contribute to the [4Fe-4S] cluster site. S-adenosyl-L-methionine contacts are provided by Q298, F332, N337, E353, D379, and D401. C427 (nucleophile) is an active-site residue.

Belongs to the class I-like SAM-binding methyltransferase superfamily. RNA M5U methyltransferase family. RlmD subfamily.

It catalyses the reaction uridine(1939) in 23S rRNA + S-adenosyl-L-methionine = 5-methyluridine(1939) in 23S rRNA + S-adenosyl-L-homocysteine + H(+). Its function is as follows. Catalyzes the formation of 5-methyl-uridine at position 1939 (m5U1939) in 23S rRNA. In Halomonas elongata (strain ATCC 33173 / DSM 2581 / NBRC 15536 / NCIMB 2198 / 1H9), this protein is 23S rRNA (uracil(1939)-C(5))-methyltransferase RlmD.